Here is a 308-residue protein sequence, read N- to C-terminus: MSQLRKAPEGILGFPVAPFNREGKLEEEALYENIRFLLDEGLEAVFIACGSGEFQSLSTKEYEQMVEIAVSAADGKVPVYTGVGGNLSTALEWARISEEKGADGYLILPPYLIHGEQEGLYQYTKTIIESTDLNAIIYQRDNAVLTLEQIQRLTDLEQLVGLKDGIGDMALNISLSYTIGDRLGWLNGMPMAEVTMPAYAPIGFTSYSSAISNYIPHISRMFYEALLNGNDRLVKEIYEQVIIPINEIRKLRKGYAVSLIKAGMEIMGLHVKNTARPPIVPVEKEHCRQLENILKNAMARYPKTTAAL.

Belongs to the DapA family.

The catalysed reaction is 5-dehydro-4-deoxy-D-glucarate + H(+) = 2,5-dioxopentanoate + CO2 + H2O. It functions in the pathway carbohydrate acid metabolism; D-glucarate degradation; 2,5-dioxopentanoate from D-glucarate: step 2/2. This chain is Probable 5-dehydro-4-deoxyglucarate dehydratase, found in Bacillus licheniformis (strain ATCC 14580 / DSM 13 / JCM 2505 / CCUG 7422 / NBRC 12200 / NCIMB 9375 / NCTC 10341 / NRRL NRS-1264 / Gibson 46).